Consider the following 185-residue polypeptide: Ribosome-recycling factor (185 aa).

Belongs to the RRF family.

Its subcellular location is the cytoplasm. Functionally, responsible for the release of ribosomes from messenger RNA at the termination of protein biosynthesis. May increase the efficiency of translation by recycling ribosomes from one round of translation to another. The polypeptide is Ribosome-recycling factor (Baumannia cicadellinicola subsp. Homalodisca coagulata).